We begin with the raw amino-acid sequence, 434 residues long: ATP-dependent protease ATPase subunit HslU (434 aa).

ATP is bound by residues I18, 60–65 (GVGKTE), D247, E312, and R384.

It belongs to the ClpX chaperone family. HslU subfamily. A double ring-shaped homohexamer of HslV is capped on each side by a ring-shaped HslU homohexamer. The assembly of the HslU/HslV complex is dependent on binding of ATP.

It is found in the cytoplasm. ATPase subunit of a proteasome-like degradation complex; this subunit has chaperone activity. The binding of ATP and its subsequent hydrolysis by HslU are essential for unfolding of protein substrates subsequently hydrolyzed by HslV. HslU recognizes the N-terminal part of its protein substrates and unfolds these before they are guided to HslV for hydrolysis. This Brucella melitensis biotype 1 (strain ATCC 23456 / CCUG 17765 / NCTC 10094 / 16M) protein is ATP-dependent protease ATPase subunit HslU.